A 719-amino-acid polypeptide reads, in one-letter code: Polyribonucleotide nucleotidyltransferase (719 aa).

Mg(2+)-binding residues include aspartate 507 and aspartate 513. Positions 573–633 (PKLELFSVDP…EQIKAAKDYI (61 aa)) constitute a KH domain. Positions 658–719 (GQEFQGIVKK…NGKISVDLCE (62 aa)) constitute an S1 motif domain.

Belongs to the polyribonucleotide nucleotidyltransferase family. The cofactor is Mg(2+).

Its subcellular location is the cytoplasm. It catalyses the reaction RNA(n+1) + phosphate = RNA(n) + a ribonucleoside 5'-diphosphate. Involved in mRNA degradation. Catalyzes the phosphorolysis of single-stranded polyribonucleotides processively in the 3'- to 5'-direction. This chain is Polyribonucleotide nucleotidyltransferase, found in Campylobacter jejuni (strain RM1221).